Consider the following 89-residue polypeptide: Elongation factor 1-beta (89 aa).

It belongs to the EF-1-beta/EF-1-delta family.

Functionally, promotes the exchange of GDP for GTP in EF-1-alpha/GDP, thus allowing the regeneration of EF-1-alpha/GTP that could then be used to form the ternary complex EF-1-alpha/GTP/AAtRNA. The protein is Elongation factor 1-beta (ef1b) of Methanocaldococcus jannaschii (strain ATCC 43067 / DSM 2661 / JAL-1 / JCM 10045 / NBRC 100440) (Methanococcus jannaschii).